We begin with the raw amino-acid sequence, 338 residues long: 1-aminocyclopropane-1-carboxylate deaminase (338 aa).

At K51 the chain carries N6-(pyridoxal phosphate)lysine. S78 (nucleophile) is an active-site residue.

This sequence belongs to the ACC deaminase/D-cysteine desulfhydrase family. In terms of assembly, homotrimer. It depends on pyridoxal 5'-phosphate as a cofactor.

It carries out the reaction 1-aminocyclopropane-1-carboxylate + H2O = 2-oxobutanoate + NH4(+). Its function is as follows. Catalyzes a cyclopropane ring-opening reaction, the irreversible conversion of 1-aminocyclopropane-1-carboxylate (ACC) to ammonia and alpha-ketobutyrate. Allows growth on ACC as a nitrogen source. The sequence is that of 1-aminocyclopropane-1-carboxylate deaminase from Acidovorax ebreus (strain TPSY) (Diaphorobacter sp. (strain TPSY)).